We begin with the raw amino-acid sequence, 214 residues long: MSKPPPKPVKPGQVKVFRALYTFEPRTPDELYFEEGDIIYITDMSDTNWWKGTCKGRTGLIPSNYVAEQAESIDNPLHEAAKRGNLSWLRECLDNRVGVNGLDKAGSTALYWACHGGHRDIVEMLFTQPNIELNQQNKLGDTALHAAAWKGYADIVQLLLEKGARTDLRNNEKKLALDMATNAACASLLKKKQGTDAVRSLSNAEDYLDDEDSD.

N-acetylserine is present on S2. The 60-residue stretch at 12–71 (GQVKVFRALYTFEPRTPDELYFEEGDIIYITDMSDTNWWKGTCKGRTGLIPSNYVAEQAE) folds into the SH3 domain. ANK repeat units lie at residues 72–101 (SIDNPLHEAAKRGNLSWLRECLDNRVGVNG), 105–135 (AGSTALYWACHGGHRDIVEMLFTQPNIELNQ), and 139–168 (LGDTALHAAAWKGYADIVQLLLEKGARTDL). 2 positions are modified to phosphoserine: S202 and S213.

Interacts with SRC and SMN1. Interacts with FASLG.

The protein resides in the cytoplasm. Induces bone resorption, acting probably through a signaling cascade which results in the secretion of factor(s) enhancing osteoclast formation and activity. The protein is Osteoclast-stimulating factor 1 (OSTF1) of Bos taurus (Bovine).